Reading from the N-terminus, the 353-residue chain is Phosphate acyltransferase (353 aa).

The protein belongs to the PlsX family. Homodimer. Probably interacts with PlsY.

It is found in the cytoplasm. The enzyme catalyses a fatty acyl-[ACP] + phosphate = an acyl phosphate + holo-[ACP]. The protein operates within lipid metabolism; phospholipid metabolism. Its function is as follows. Catalyzes the reversible formation of acyl-phosphate (acyl-PO(4)) from acyl-[acyl-carrier-protein] (acyl-ACP). This enzyme utilizes acyl-ACP as fatty acyl donor, but not acyl-CoA. This chain is Phosphate acyltransferase, found in Bradyrhizobium sp. (strain BTAi1 / ATCC BAA-1182).